A 401-amino-acid chain; its full sequence is cAMP-dependent protein kinase type II-alpha regulatory subunit (401 aa).

S2 carries the post-translational modification N-acetylserine. The tract at residues 2–135 (SHIQIPPGLT…RLQEACKDIL (134 aa)) is dimerization and phosphorylation. Residues S47, S74, S76, and S96 each carry the phosphoserine modification. Positions 61 to 83 (ESSAVPVIEEDGESDSDSEDADL) are disordered. The span at 68–83 (IEEDGESDSDSEDADL) shows a compositional bias: acidic residues. 3',5'-cyclic AMP contacts are provided by residues 136–257 (LFKN…ESVP), E205, R214, 258–401 (LFKS…DPGQ), E335, and R344. At T212 the chain carries Phosphothreonine; by PDPK1. 2 positions are modified to phosphoserine: S347 and S392.

The protein belongs to the cAMP-dependent kinase regulatory chain family. The inactive form of the enzyme is composed of two regulatory chains and two catalytic chains. Activation by cAMP produces two active catalytic monomers and a regulatory dimer that binds four cAMP molecules. Interacts with AKAP4. Interacts with CBFA2T3. Interacts with the phosphorylated form of PJA2. Interacts with MYRIP. This interaction may link PKA to components of the exocytosis machinery, thus facilitating exocytosis, including insulin release. Forms a complex composed of PRKAR2A, GSK3B and GSKIP through GSKIP interaction; facilitates PKA-induced phosphorylation and regulates GSK3B activity. Interacts with ADCY8; inhibits adenylate cyclase activity through PKA phosphorylation. Post-translationally, phosphorylated by the activated catalytic chain. As to expression, four types of regulatory chains are found: I-alpha, I-beta, II-alpha, and II-beta. Their expression varies among tissues and is in some cases constitutive and in others inducible.

It is found in the cytoplasm. Its subcellular location is the cell membrane. Its function is as follows. Regulatory subunit of the cAMP-dependent protein kinases involved in cAMP signaling in cells. Type II regulatory chains mediate membrane association by binding to anchoring proteins, including the MAP2 kinase. This is cAMP-dependent protein kinase type II-alpha regulatory subunit (Prkar2a) from Mus musculus (Mouse).